The following is a 482-amino-acid chain: Anthocyanin 3'-O-beta-glucosyltransferase (482 aa).

The Proton acceptor role is filled by His16. His16 is an an anthocyanidin binding site. Asp119 functions as the Charge relay in the catalytic mechanism. UDP-alpha-D-glucose is bound by residues Ala349, Gln351, His366, Trp369, Asn370, Ser371, and Glu374. Ala389 is a binding site for an anthocyanidin. UDP-alpha-D-glucose contacts are provided by Glu390 and Gln391.

Belongs to the UDP-glycosyltransferase family. The N-terminus is blocked. As to expression, abundant in petals and barely detected in leaves.

It carries out the reaction delphinidin 3,5-bis-O-beta-D-glucoside + UDP-alpha-D-glucose = delphinidin 3,3',5-tri-O-beta-D-glucoside + UDP + H(+). In terms of biological role, specifically glucosylates the 3'-hydroxy group of delphinidin 3,5-di-O-glucoside to produce gentiodelphin. Shows a strict specificity for UDP-glucose as donor. The sequence is that of Anthocyanin 3'-O-beta-glucosyltransferase from Gentiana triflora (Clustered gentian).